Here is a 312-residue protein sequence, read N- to C-terminus: tRNA dimethylallyltransferase (312 aa).

ATP is bound at residue 10-17; it reads GPTAVGKT. 12 to 17 serves as a coordination point for substrate; that stretch reads TAVGKT. Residues 35-38 are interaction with substrate tRNA; sequence DSMQ.

The protein belongs to the IPP transferase family. Monomer. Mg(2+) serves as cofactor.

The enzyme catalyses adenosine(37) in tRNA + dimethylallyl diphosphate = N(6)-dimethylallyladenosine(37) in tRNA + diphosphate. Catalyzes the transfer of a dimethylallyl group onto the adenine at position 37 in tRNAs that read codons beginning with uridine, leading to the formation of N6-(dimethylallyl)adenosine (i(6)A). The protein is tRNA dimethylallyltransferase of Alkaliphilus metalliredigens (strain QYMF).